A 471-amino-acid polypeptide reads, in one-letter code: Abscission/NoCut checkpoint regulator (471 aa).

The tract at residues 39-64 (GGAGQGREGRSWGEGPRGPGLGRRDL) is disordered. An FYVE-type zinc finger spans residues 74–133 (ATMESRCYGCAVKFTLFKKEYGCKNCGRAFCSGCLSFSAAVPRTGNTQQKVCKQCHEVLT). Positions 80, 83, 96, 99, 104, 107, 125, and 128 each coordinate Zn(2+). A Phosphoserine modification is found at Ser144. The MIM1-A signature appears at 174 to 187 (DQMIAERLARLRQE). Lys207 is covalently cross-linked (Glycyl lysine isopeptide (Lys-Gly) (interchain with G-Cter in SUMO2)). Position 243 is a phosphothreonine (Thr243). The tract at residues 271–299 (KGGGPAASLQNDLNQGGPGSTNSKRQANW) is disordered. Polar residues predominate over residues 278-299 (SLQNDLNQGGPGSTNSKRQANW). Phosphoserine occurs at positions 286 and 293. Positions 311 to 375 (EAALELREEN…RVLQQLTEEA (65 aa)) form a coiled coil. An MIM1-B motif is present at residues 326–339 (ILALAKRLAMLRGQ). Ser354 is modified (phosphoserine). A disordered region spans residues 386–412 (PAEQASRPWTQPRGAEPEAQDVDPRPE). The residue at position 463 (Ser463) is a Phosphoserine.

Interacts (via MIM1-B) with VPS4A; interaction takes place at the midbody ring following cytokinesis checkpoint activation. In terms of processing, phosphorylated in vitro at Ser-22 by AURKB; however, phosphorylation at this site could not be confirmed in vivo. In terms of tissue distribution, detected in brain, heart, skeletal muscle and kidney. Expressed in the liver (at protein level).

It localises to the cytoplasm. The protein localises to the cytoskeleton. The protein resides in the microtubule organizing center. It is found in the centrosome. Its subcellular location is the cleavage furrow. It localises to the midbody. The protein localises to the midbody ring. Key regulator of abscission step in cytokinesis: part of the cytokinesis checkpoint, a process required to delay abscission to prevent both premature resolution of intercellular chromosome bridges and accumulation of DNA damage. Together with CHMP4C, required to retain abscission-competent VPS4 (VPS4A and/or VPS4B) at the midbody ring until abscission checkpoint signaling is terminated at late cytokinesis. Deactivation of AURKB results in dephosphorylation of CHMP4C followed by its dissociation from ZFYVE19/ANCHR and VPS4 and subsequent abscission. This Homo sapiens (Human) protein is Abscission/NoCut checkpoint regulator (ZFYVE19).